The following is a 718-amino-acid chain: Potassium channel KAT1 (718 aa).

The Cytoplasmic portion of the chain corresponds to 1-60 (MTQAHSKSCFHQFWDGLQIKRSSDSFTVELLPSLGATINHSNKLQKFIISPYDPRYRSWE). Residues 61–81 (LFLIVLVVYSAWICPFELAFL) traverse the membrane as a helical segment. Over 82 to 88 (RDLPSKL) the chain is Extracellular. The helical transmembrane segment at 89–109 (LLVENIVDIFFAIDIVLTFFV) threads the bilayer. The Cytoplasmic portion of the chain corresponds to 110–132 (AYVDSKTHLLVDDRKRIAMRYLS). A helical membrane pass occupies residues 133–153 (TWFIFDVCSTAPFQPIILLFT). Over 154 to 162 (HKGNDIAFK) the chain is Extracellular. The helical; Voltage-sensor transmembrane segment at 163-183 (VLNLLRLWRLHRVSSLFARLE) threads the bilayer. Topologically, residues 184-197 (KDIRFNYFWTRCSK) are cytoplasmic. The helical transmembrane segment at 198–218 (LISVTLFAVHCAGCFNYMIAD) threads the bilayer. Topologically, residues 219-245 (RYPNPEKTWIGAVMSTFRSESLWTRYI) are extracellular. Residues 246–265 (TALYWSITTLTTTGYGDLHA) constitute an intramembrane region (pore-forming). Residues 266-269 (ENPT) are Extracellular-facing. The helical transmembrane segment at 270–290 (EMLFDIVYMMFNLGLTAYLIG) threads the bilayer. Over 291-718 (NMTNLVVHGT…DGDHLFLLEM (428 aa)) the chain is Cytoplasmic. A nucleoside 3',5'-cyclic phosphate is bound at residue 374–493 (LFNGVSGNFI…NILMNNLVQK (120 aa)). The disordered stretch occupies residues 560–584 (EATRSSASENENSSMTDKEENHDEV). Residues 562–574 (TRSSASENENSSM) show a composition bias toward polar residues. Positions 575-584 (TDKEENHDEV) are enriched in basic and acidic residues. Positions 647–718 (RVTIHKYRHN…DGDHLFLLEM (72 aa)) constitute a KHA domain.

The protein belongs to the potassium channel family. Plant (TC 1.A.1.4) subfamily.

The protein localises to the membrane. Probable inward-rectifying potassium channel. Assuming opened or closed conformations in response to the voltage difference across the membrane, the channel is activated by hyperpolarization. The chain is Potassium channel KAT1 from Oryza sativa subsp. japonica (Rice).